Reading from the N-terminus, the 491-residue chain is Glutamyl-tRNA(Gln) amidotransferase subunit A (491 aa).

Residues lysine 78 and serine 158 each act as charge relay system in the active site. Serine 182 functions as the Acyl-ester intermediate in the catalytic mechanism.

It belongs to the amidase family. GatA subfamily. As to quaternary structure, heterotrimer of A, B and C subunits.

It carries out the reaction L-glutamyl-tRNA(Gln) + L-glutamine + ATP + H2O = L-glutaminyl-tRNA(Gln) + L-glutamate + ADP + phosphate + H(+). Allows the formation of correctly charged Gln-tRNA(Gln) through the transamidation of misacylated Glu-tRNA(Gln) in organisms which lack glutaminyl-tRNA synthetase. The reaction takes place in the presence of glutamine and ATP through an activated gamma-phospho-Glu-tRNA(Gln). The polypeptide is Glutamyl-tRNA(Gln) amidotransferase subunit A (Bradyrhizobium sp. (strain ORS 278)).